Reading from the N-terminus, the 346-residue chain is GTPase Obg (346 aa).

Residues 1 to 158 (MFVDECVVKL…GTYRLVLKSI (158 aa)) enclose the Obg domain. One can recognise an OBG-type G domain in the interval 159 to 332 (ADVGLVGFPN…LKKELLKRVT (174 aa)). GTP is bound by residues 165–172 (GFPNAGKS), 190–194 (FTTLH), 216–219 (DVPG), 286–289 (NKMD), and 313–315 (SCL). Residues Ser172 and Thr192 each contribute to the Mg(2+) site.

This sequence belongs to the TRAFAC class OBG-HflX-like GTPase superfamily. OBG GTPase family. As to quaternary structure, monomer. Mg(2+) is required as a cofactor.

It is found in the cytoplasm. In terms of biological role, an essential GTPase which binds GTP, GDP and possibly (p)ppGpp with moderate affinity, with high nucleotide exchange rates and a fairly low GTP hydrolysis rate. Plays a role in control of the cell cycle, stress response, ribosome biogenesis and in those bacteria that undergo differentiation, in morphogenesis control. The sequence is that of GTPase Obg from Opitutus terrae (strain DSM 11246 / JCM 15787 / PB90-1).